The primary structure comprises 423 residues: MNREGLLIEILKNQVVPALGCTEPIAVAYGVSKAKEILGEEVEHMEVNVDRSIFKNGKEVGIPGTDKKGILIAAALSIIVGKSEYSLQVLKDLTNEDIPKALELIQNNVVKLNLKEGVKGLYIEIIASGNKNKSRVVIKNNHLNIVLLEKNGMCIEEKSEEKSSVSVNLRDEIRNFTIKDLKDFVDNIDIEDIYFINEGIAMNKRIAKEGLDNKLGLGLGDLLKSEENNVIEYAKAVTSGACEARMSGYPLPVMSSAGSGNHGLVAILPIASIGEKLEKNEEKVIRSVALSHLVTIYIKSYTGALSPVCGCGVAAGVGASAGLCYLMDGTLEQIYGAIKNMIAGISGMICDGAKLGCAYKLCISVSSSIDAARMALKNIFVPSNDGILDETAEKSIQNLGKVSTDGMSCTDEVILEVMLDRCN.

This sequence belongs to the UPF0597 family.

This Clostridium tetani (strain Massachusetts / E88) protein is UPF0597 protein CTC_02309.